A 528-amino-acid chain; its full sequence is Glucose-6-phosphate isomerase (528 aa).

Glutamate 322 (proton donor) is an active-site residue. Active-site residues include histidine 351 and lysine 455.

This sequence belongs to the GPI family.

It is found in the cytoplasm. It catalyses the reaction alpha-D-glucose 6-phosphate = beta-D-fructose 6-phosphate. It participates in carbohydrate biosynthesis; gluconeogenesis. It functions in the pathway carbohydrate degradation; glycolysis; D-glyceraldehyde 3-phosphate and glycerone phosphate from D-glucose: step 2/4. Catalyzes the reversible isomerization of glucose-6-phosphate to fructose-6-phosphate. This Nostoc punctiforme (strain ATCC 29133 / PCC 73102) protein is Glucose-6-phosphate isomerase.